A 400-amino-acid polypeptide reads, in one-letter code: Calsequestrin-2 (400 aa).

The signal sequence occupies residues 1 to 19 (MKRTHLFIVGVYVLSSCRA). Y282 is modified (phosphotyrosine). N335 is a glycosylation site (N-linked (GlcNAc...) asparagine). The segment at 365 to 400 (VLSGKINTEDDDDEDDDDDNSDEEDNDDSDDDDDDE) is disordered. Positions 373 to 400 (EDDDDEDDDDDNSDEEDNDDSDDDDDDE) are enriched in acidic residues.

It belongs to the calsequestrin family. Monomer, homodimer and homooligomer. Mostly monomeric in the absence of calcium. Forms higher oligomers in a calcium-dependent manner. Dimers associate to form tetramers, that then form linear homomer chains. Interacts with ASPH and TRDN. In terms of processing, phosphorylation in the C-terminus, probably by CK2, moderately increases calcium buffering capacity. N-glycosylated.

It localises to the sarcoplasmic reticulum lumen. Calsequestrin is a high-capacity, moderate affinity, calcium-binding protein and thus acts as an internal calcium store in muscle. Calcium ions are bound by clusters of acidic residues at the protein surface, especially at the interface between subunits. Can bind around 60 Ca(2+) ions. Regulates the release of lumenal Ca(2+) via the calcium release channel RYR2; this plays an important role in triggering muscle contraction. Plays a role in excitation-contraction coupling in the heart and in regulating the rate of heart beats. This Pongo abelii (Sumatran orangutan) protein is Calsequestrin-2 (CASQ2).